Here is a 212-residue protein sequence, read N- to C-terminus: uncharacterized protein (212 aa).

The S-adenosyl-L-methionine site is built by Gly-53, Glu-74, and Asp-97.

It belongs to the methyltransferase superfamily. YrrT family.

Functionally, could be a S-adenosyl-L-methionine-dependent methyltransferase. This is an uncharacterized protein from Bacillus cereus (strain ZK / E33L).